Reading from the N-terminus, the 516-residue chain is GMP synthase [glutamine-hydrolyzing] (516 aa).

Positions 8–198 (KILILDFGSQ…VVNICGCDTL (191 aa)) constitute a Glutamine amidotransferase type-1 domain. C84 (nucleophile) is an active-site residue. Residues H172 and E174 contribute to the active site. The GMPS ATP-PPase domain occupies 199 to 391 (WNIENIIEND…LGLPYNMLYR (193 aa)). Position 226-232 (226-232 (SGGVDSS)) interacts with ATP.

In terms of assembly, homodimer.

The enzyme catalyses XMP + L-glutamine + ATP + H2O = GMP + L-glutamate + AMP + diphosphate + 2 H(+). It functions in the pathway purine metabolism; GMP biosynthesis; GMP from XMP (L-Gln route): step 1/1. Functionally, catalyzes the synthesis of GMP from XMP. The polypeptide is GMP synthase [glutamine-hydrolyzing] (Francisella tularensis subsp. holarctica (strain LVS)).